The sequence spans 87 residues: Apoptosis inducing factor BLCAP B (87 aa).

A run of 2 helical transmembrane segments spans residues 19-39 (PALWFSHSVFMGFYLLSFLLE) and 43-63 (CTICALVFLGALFLICYSCWG).

This sequence belongs to the BLCAP family.

It localises to the cytoplasm. The protein resides in the nucleus. The protein localises to the membrane. Its function is as follows. Acts as a tumor suppressor; induces growth arrest at G(1)/S checkpoint and apoptosis via RB1-dependent and p53/TP53- and NF-kappa-B-independent mechanisms. Modulates expression of genes involved in the regulation of proliferation, cell cycle and apoptosis. The sequence is that of Apoptosis inducing factor BLCAP B (blcap-b) from Xenopus laevis (African clawed frog).